A 124-amino-acid chain; its full sequence is Translation initiation factor 5A (124 aa).

Residues 27–53 (TSYSTSKPGKHGSAKARVEGTGVFDGQ) form a disordered region. K36 carries the hypusine modification.

It belongs to the eIF-5A family.

The protein localises to the cytoplasm. In terms of biological role, functions by promoting the formation of the first peptide bond. This Natronomonas pharaonis (strain ATCC 35678 / DSM 2160 / CIP 103997 / JCM 8858 / NBRC 14720 / NCIMB 2260 / Gabara) (Halobacterium pharaonis) protein is Translation initiation factor 5A.